A 73-amino-acid chain; its full sequence is UPF0499 protein NFIA_054990 (73 aa).

A signal peptide spans 1–20; the sequence is MKSFNLLSLSLLLAIASAAA. Cystine bridges form between cysteine 46-cysteine 60, cysteine 50-cysteine 63, and cysteine 56-cysteine 70.

The protein belongs to the UPF0499 family.

It is found in the secreted. The polypeptide is UPF0499 protein NFIA_054990 (Neosartorya fischeri (strain ATCC 1020 / DSM 3700 / CBS 544.65 / FGSC A1164 / JCM 1740 / NRRL 181 / WB 181) (Aspergillus fischerianus)).